Consider the following 509-residue polypeptide: Maturase K (509 aa).

Belongs to the intron maturase 2 family. MatK subfamily.

It localises to the plastid. The protein resides in the chloroplast. Usually encoded in the trnK tRNA gene intron. Probably assists in splicing its own and other chloroplast group II introns. In Nicotiana bigelovii (Bigelov's tobacco), this protein is Maturase K.